An 841-amino-acid chain; its full sequence is DNA mismatch repair protein MutS (841 aa).

ATP is bound at residue 600–607; that stretch reads GPNMAGKS.

It belongs to the DNA mismatch repair MutS family.

This protein is involved in the repair of mismatches in DNA. It is possible that it carries out the mismatch recognition step. This protein has a weak ATPase activity. The protein is DNA mismatch repair protein MutS of Carboxydothermus hydrogenoformans (strain ATCC BAA-161 / DSM 6008 / Z-2901).